Here is a 550-residue protein sequence, read N- to C-terminus: Silent protein UshA(0) (550 aa).

An N-terminal signal peptide occupies residues 1–25 (MKFLKRGVALALLAAFALTTQPAQA). Residues Asp41, His43, Asp84, Asn116, His217, His252, and Gln254 each contribute to the a divalent metal cation site. Cys258 and Cys275 are joined by a disulfide. Residues Phe429 and 498-504 (FNATGGD) contribute to the substrate site.

Belongs to the 5'-nucleotidase family. A divalent metal cation serves as cofactor.

The protein localises to the periplasm. The protein is Silent protein UshA(0) (ushA) of Salmonella typhimurium (strain LT2 / SGSC1412 / ATCC 700720).